Reading from the N-terminus, the 305-residue chain is MMEGNVQEELELEKSVRRFREKFHGKVALETAVVLMRRFANNHNQVCTYVILYMDNDTDLDVRNHLRNDQVAMNVINKIKRDDQRAKEMPKDKDIQDLAKKMNTLPLTQKNLKMFNDAAENRIPARDRQFACKECDYMWWRRVPQRKEVSRCQRCRKKFDPVPDNKMWGIGEYNCQSCKRMFRGYGQIEVSSPCYMCSKPVSPSCILPPRRNQGPRTRNTHSCFAEYCYNRKEPFVPGLQCAHPKSRILNQLPKVLHPSEWHISTGSTIATCLSQGSLNENDIDDIILDDIKEEEDDEETDDSDS.

The short motif at 141-157 is the Nuclear localization signal element; sequence RRVPQRKEVSRCQRCRK. Positions 279-288 match the Nuclear export signal motif; the sequence is NENDIDDIIL.

This sequence belongs to the SHFL family.

It localises to the cytoplasm. The protein localises to the nucleus. Its subcellular location is the P-body. In terms of biological role, inhibits programmed -1 ribosomal frameshifting (-1PRF) of a variety of mRNAs from viruses and cellular genes. Interacts with the -1PRF signal of target mRNA and translating ribosomes and causes premature translation termination at the frameshifting site. May exhibit antiviral activity. The polypeptide is Shiftless antiviral inhibitor of ribosomal frameshifting protein homolog (shfl) (Xenopus laevis (African clawed frog)).